The primary structure comprises 298 residues: Foldase protein PrsA 1 (298 aa).

The first 23 residues, 1–23 (MNKTWKKAATVLAFAGIALSATA), serve as a signal peptide directing secretion. A lipid anchor (N-palmitoyl cysteine) is attached at C24. C24 carries S-diacylglycerol cysteine lipidation. The 94-residue stretch at 141–234 (QPEVTVQHIL…YGYHVIKMIK (94 aa)) folds into the PpiC domain.

It belongs to the PrsA family.

It is found in the cell membrane. The enzyme catalyses [protein]-peptidylproline (omega=180) = [protein]-peptidylproline (omega=0). Functionally, plays a major role in protein secretion by helping the post-translocational extracellular folding of several secreted proteins. The sequence is that of Foldase protein PrsA 1 (prsA1) from Lactobacillus johnsonii (strain CNCM I-12250 / La1 / NCC 533).